The chain runs to 749 residues: uncharacterized protein (749 aa).

The region spanning 63-243 (FQYVQKGESI…QLTGKPMRLV (181 aa)) is the Helicase ATP-binding domain. 76–83 (TPTASGKT) serves as a coordination point for ATP. The DEVH box motif lies at 185-188 (DELH). The Helicase C-terminal domain occupies 276–430 (EVNELAKEFL…SARINPENLI (155 aa)).

The protein belongs to the helicase family.

This is an uncharacterized protein from Bacillus subtilis (strain 168).